The following is a 97-amino-acid chain: MFCVLKFLSCTLSRINIVQKLSDAAVPPKKAAPKKAVAKKTPAKKTAKKPAVKKPAAKKRAAPKKKPAAAKKAVTKSAKKHAAKKAPKKAVKKAPKK.

Positions 24 to 97 (AAVPPKKAAP…KKAVKKAPKK (74 aa)) are disordered. Positions 31–97 (AAPKKAVAKK…KKAVKKAPKK (67 aa)) are enriched in basic residues.

It localises to the nucleus. It is found in the chromosome. This Trypanosoma cruzi protein is Histone H1.C2.